A 188-amino-acid polypeptide reads, in one-letter code: Peptidyl-tRNA hydrolase (188 aa).

Position 14 (Tyr14) interacts with tRNA. The Proton acceptor role is filled by His19. Residues Tyr64, Asn66, and Asn112 each contribute to the tRNA site.

Belongs to the PTH family. As to quaternary structure, monomer.

Its subcellular location is the cytoplasm. It catalyses the reaction an N-acyl-L-alpha-aminoacyl-tRNA + H2O = an N-acyl-L-amino acid + a tRNA + H(+). Its function is as follows. Hydrolyzes ribosome-free peptidyl-tRNAs (with 1 or more amino acids incorporated), which drop off the ribosome during protein synthesis, or as a result of ribosome stalling. Catalyzes the release of premature peptidyl moieties from peptidyl-tRNA molecules trapped in stalled 50S ribosomal subunits, and thus maintains levels of free tRNAs and 50S ribosomes. This chain is Peptidyl-tRNA hydrolase, found in Bacillus velezensis (strain DSM 23117 / BGSC 10A6 / LMG 26770 / FZB42) (Bacillus amyloliquefaciens subsp. plantarum).